Consider the following 507-residue polypeptide: ESX-5 secretion system ATPase EccB5 (507 aa).

Residues 56–76 (VVASVSAALVICLGSLLWSFI) form a helical membrane-spanning segment.

This sequence belongs to the EccB family. Part of the ESX-5 / type VII secretion system (T7SS), which is composed of cytosolic and membrane components. The ESX-5 membrane complex is composed of EccB5, EccC5, EccD5 and EccE5.

Its subcellular location is the cell inner membrane. Functionally, an ATPase. Part of the ESX-5 specialized secretion system, which is responsible for the secretion of EsxN and a number of PE_PGRS and PPE proteins. The chain is ESX-5 secretion system ATPase EccB5 from Mycobacterium marinum (strain ATCC BAA-535 / M).